The following is a 115-amino-acid chain: Double-headed protease inhibitor, submandibular gland (115 aa).

2 consecutive Kazal-like domains span residues 6 to 66 (IGRE…ACDI) and 67 to 115 (ECTE…HGEC). Disulfide bonds link Cys12/Cys46, Cys24/Cys43, Cys32/Cys64, Cys68/Cys97, Cys75/Cys94, and Cys83/Cys115.

The protein localises to the secreted. Its function is as follows. This inhibitor is composed of two homologous actively inhibiting halves: one which inhibits trypsin, the other which inhibits elastase. In Vulpes vulpes (Red fox), this protein is Double-headed protease inhibitor, submandibular gland.